The chain runs to 219 residues: MRIVLVGPPGAGKGTQAAYLAQNLSIPHIATGDLFRANISQGTDLGKQARAYMDAGQLVPDEVTIGMAKDRMAQADAAGGFLLDGFPRNVGQAEALDVMLKDEGVKLDAVLDLEVPEDEVVKRIAGRRVCRNNSAHVFHLTYNPPKAEGVCDACGGELYQRDDDSEETVRTRLEVYHTQTEPIIDYYRAQGLVVTISALGKVADVTARAMEALKASDEG.

Residue 10–15 (GAGKGT) participates in ATP binding. The segment at 30 to 59 (ATGDLFRANISQGTDLGKQARAYMDAGQLV) is NMP. AMP is bound by residues threonine 31, arginine 36, 57-59 (QLV), 85-88 (GFPR), and glutamine 92. The tract at residues 126-164 (GRRVCRNNSAHVFHLTYNPPKAEGVCDACGGELYQRDDD) is LID. ATP-binding positions include arginine 127 and 137-138 (VF). Residues arginine 161 and arginine 172 each coordinate AMP. Glycine 200 contributes to the ATP binding site.

It belongs to the adenylate kinase family. As to quaternary structure, monomer.

The protein localises to the cytoplasm. The enzyme catalyses AMP + ATP = 2 ADP. Its pathway is purine metabolism; AMP biosynthesis via salvage pathway; AMP from ADP: step 1/1. Functionally, catalyzes the reversible transfer of the terminal phosphate group between ATP and AMP. Plays an important role in cellular energy homeostasis and in adenine nucleotide metabolism. The sequence is that of Adenylate kinase from Streptomyces griseus subsp. griseus (strain JCM 4626 / CBS 651.72 / NBRC 13350 / KCC S-0626 / ISP 5235).